The primary structure comprises 178 residues: Adenine phosphoribosyltransferase (178 aa).

The protein belongs to the purine/pyrimidine phosphoribosyltransferase family. Homodimer.

The protein resides in the cytoplasm. The enzyme catalyses AMP + diphosphate = 5-phospho-alpha-D-ribose 1-diphosphate + adenine. The protein operates within purine metabolism; AMP biosynthesis via salvage pathway; AMP from adenine: step 1/1. Catalyzes a salvage reaction resulting in the formation of AMP, that is energically less costly than de novo synthesis. In Cereibacter sphaeroides (strain KD131 / KCTC 12085) (Rhodobacter sphaeroides), this protein is Adenine phosphoribosyltransferase.